The chain runs to 290 residues: Phycobilisome 32.3 kDa linker polypeptide, phycocyanin-associated, rod (290 aa).

Residues 1–179 (MPVTVAASRL…LQRGYANSDR (179 aa)) enclose the PBS-linker domain. Positions 236 to 288 (DQVVRVEVAALSTPRYPRIRRSSRVFFVPVSRLSQKLQEIQRMGGRVASISPA) constitute a CpcD-like domain.

This sequence belongs to the phycobilisome linker protein family.

The protein localises to the cellular thylakoid membrane. Rod linker protein, associated with phycocyanin. Linker polypeptides determine the state of aggregation and the location of the disk-shaped phycobiliprotein units within the phycobilisome and modulate their spectroscopic properties in order to mediate a directed and optimal energy transfer. This Picosynechococcus sp. (strain ATCC 27264 / PCC 7002 / PR-6) (Agmenellum quadruplicatum) protein is Phycobilisome 32.3 kDa linker polypeptide, phycocyanin-associated, rod (cpcC).